We begin with the raw amino-acid sequence, 216 residues long: Fucoxanthin-chlorophyll a-c binding protein C, chloroplastic (216 aa).

The N-terminal 38 residues, 1–38, are a transit peptide targeting the chloroplast; that stretch reads MKSAIMAVASAAPGLRGPSAFNGAALTTSAKSSSAMKM. Transmembrane regions (helical) follow at residues 80-100, 121-141, and 182-202; these read IAMLAIAGHLTQQNARLPGML, IPPGGLAQIFGFIGFLELAVM, and GRAAQMGILALMVHEELNNKP.

The protein belongs to the fucoxanthin chlorophyll protein family. As to quaternary structure, the LHC complex of chromophytic algae is composed of fucoxanthin, chlorophyll A and C bound non-covalently by fucoxanthin chlorophyll proteins (FCPs). The ratio of pigments in this LHC is; fucoxanthin: chlorophyll C: chlorophyll A; (0.6-1): (0.1-0.3): (1).

The protein resides in the plastid. The protein localises to the chloroplast thylakoid membrane. In terms of biological role, the light-harvesting complex (LHC) functions as a light receptor, it captures and delivers excitation energy to photosystems with which it is closely associated. Energy is transferred from the carotenoid and chlorophyll C (or B) to chlorophyll A and the photosynthetic reaction centers where it is used to synthesize ATP and reducing power. The protein is Fucoxanthin-chlorophyll a-c binding protein C, chloroplastic (FCPC) of Macrocystis pyrifera (Giant kelp).